Reading from the N-terminus, the 314-residue chain is TPR repeat-containing protein MJ1345 (314 aa).

9 TPR repeats span residues 12–45 (ESIL…RESP), 46–78 (DVYV…KPKY), 80–112 (LANF…EKSD), 114–146 (PVKY…YPKS), 147–180 (AIAW…NPKD), 182–214 (QSLL…NNKD), 215–248 (IRAL…NPDD), 249–282 (PLLY…NPNI), and 284–313 (DAWN…LDIY).

The chain is TPR repeat-containing protein MJ1345 from Methanocaldococcus jannaschii (strain ATCC 43067 / DSM 2661 / JAL-1 / JCM 10045 / NBRC 100440) (Methanococcus jannaschii).